The sequence spans 351 residues: Peptide chain release factor 1 (351 aa).

Q229 carries the post-translational modification N5-methylglutamine.

It belongs to the prokaryotic/mitochondrial release factor family. Post-translationally, methylated by PrmC. Methylation increases the termination efficiency of RF1.

The protein resides in the cytoplasm. Peptide chain release factor 1 directs the termination of translation in response to the peptide chain termination codons UAG and UAA. In Cereibacter sphaeroides (strain KD131 / KCTC 12085) (Rhodobacter sphaeroides), this protein is Peptide chain release factor 1.